Reading from the N-terminus, the 721-residue chain is Phosphoribosylformylglycinamidine synthase subunit PurL (721 aa).

H47 is a catalytic residue. Residues Y50 and K89 each coordinate ATP. A Mg(2+)-binding site is contributed by E91. Residues 92–95 (SHNH) and R114 each bind substrate. H93 functions as the Proton acceptor in the catalytic mechanism. D115 is a binding site for Mg(2+). Q238 lines the substrate pocket. D266 lines the Mg(2+) pocket. 310 to 312 (ESQ) is a binding site for substrate. Residues D490 and G527 each contribute to the ATP site. N528 contacts Mg(2+). S530 serves as a coordination point for substrate.

Belongs to the FGAMS family. As to quaternary structure, monomer. Part of the FGAM synthase complex composed of 1 PurL, 1 PurQ and 2 PurS subunits.

It is found in the cytoplasm. It carries out the reaction N(2)-formyl-N(1)-(5-phospho-beta-D-ribosyl)glycinamide + L-glutamine + ATP + H2O = 2-formamido-N(1)-(5-O-phospho-beta-D-ribosyl)acetamidine + L-glutamate + ADP + phosphate + H(+). Its pathway is purine metabolism; IMP biosynthesis via de novo pathway; 5-amino-1-(5-phospho-D-ribosyl)imidazole from N(2)-formyl-N(1)-(5-phospho-D-ribosyl)glycinamide: step 1/2. Functionally, part of the phosphoribosylformylglycinamidine synthase complex involved in the purines biosynthetic pathway. Catalyzes the ATP-dependent conversion of formylglycinamide ribonucleotide (FGAR) and glutamine to yield formylglycinamidine ribonucleotide (FGAM) and glutamate. The FGAM synthase complex is composed of three subunits. PurQ produces an ammonia molecule by converting glutamine to glutamate. PurL transfers the ammonia molecule to FGAR to form FGAM in an ATP-dependent manner. PurS interacts with PurQ and PurL and is thought to assist in the transfer of the ammonia molecule from PurQ to PurL. The chain is Phosphoribosylformylglycinamidine synthase subunit PurL from Ruegeria sp. (strain TM1040) (Silicibacter sp.).